The primary structure comprises 354 residues: Methylthioribose-1-phosphate isomerase (354 aa).

Substrate contacts are provided by residues 58–60 (RGA), R101, and Q204. The active-site Proton donor is the D245. 255-256 (NK) contacts substrate.

Belongs to the eIF-2B alpha/beta/delta subunits family. MtnA subfamily.

It carries out the reaction 5-(methylsulfanyl)-alpha-D-ribose 1-phosphate = 5-(methylsulfanyl)-D-ribulose 1-phosphate. The protein operates within amino-acid biosynthesis; L-methionine biosynthesis via salvage pathway; L-methionine from S-methyl-5-thio-alpha-D-ribose 1-phosphate: step 1/6. In terms of biological role, catalyzes the interconversion of methylthioribose-1-phosphate (MTR-1-P) into methylthioribulose-1-phosphate (MTRu-1-P). This chain is Methylthioribose-1-phosphate isomerase, found in Xanthomonas euvesicatoria pv. vesicatoria (strain 85-10) (Xanthomonas campestris pv. vesicatoria).